The primary structure comprises 78 residues: UPF0369 protein RF_1112 (78 aa).

It belongs to the SDHAF4 family.

The chain is UPF0369 protein RF_1112 from Rickettsia felis (strain ATCC VR-1525 / URRWXCal2) (Rickettsia azadi).